Here is a 119-residue protein sequence, read N- to C-terminus: MKRVAFVFTHAPHGNASGREGLDALLAVSALTEEIGVFFVGDGVLQLLPQQQPDQILMRNYIATFGVLPLYDIDCCYLCETSVRQRGLSIDTNWVLDVELLAPEAWRSKLASYHSILSF.

It belongs to the DsrF/TusC family. In terms of assembly, heterohexamer, formed by a dimer of trimers. The hexameric TusBCD complex contains 2 copies each of TusB, TusC and TusD. The TusBCD complex interacts with TusE.

Its subcellular location is the cytoplasm. Its function is as follows. Part of a sulfur-relay system required for 2-thiolation of 5-methylaminomethyl-2-thiouridine (mnm(5)s(2)U) at tRNA wobble positions. This chain is Protein TusC, found in Pectobacterium carotovorum subsp. carotovorum (strain PC1).